The sequence spans 703 residues: Bifunctional arginine dihydrolase/ornithine cyclodeaminase AgrE (703 aa).

The arginine dihydrolase stretch occupies residues 10-269; it reads CPPDHYDVDY…GAAKCLTLRV (260 aa). Asparagine 22, aspartate 65, asparagine 71, arginine 90, and arginine 139 together coordinate L-arginine. Position 22 (asparagine 22) interacts with L-ornithine. L-ornithine contacts are provided by arginine 90, arginine 139, and histidine 168. The active-site Proton donor/acceptor is the histidine 168. Positions 170 and 258 each coordinate L-arginine. Cysteine 264 provides a ligand contact to L-ornithine. The active-site Nucleophile is the cysteine 264. An ornithine cyclodeaminase region spans residues 285–694; it reads SRIIRIEGHL…SLLTQQLDKL (410 aa). Residues asparagine 524, alanine 525, aspartate 603, serine 635, methionine 636, leucine 637, histidine 638, aspartate 656, aspartate 679, and valine 680 each contribute to the NAD(+) site.

This sequence in the N-terminal section; belongs to the DDAH family. In the C-terminal section; belongs to the AgrE/ArgZ ornithine cyclodeaminase family. As to quaternary structure, homotetramer. NAD(+) is required as a cofactor.

It carries out the reaction L-arginine + 2 H2O + 2 H(+) = L-ornithine + 2 NH4(+) + CO2. The enzyme catalyses L-ornithine = L-proline + NH4(+). With respect to regulation, ornithine cyclodeaminase activity is inhibited by ATP. Bifunctional enzyme involved in a cyanobacterial arginine utilization pathway that produces glutamate and enables cellular adaptation to nitrogen fluctuations. Catalyzes the hydrolysis of arginine to ornithine, with the release of ammonia and carbon dioxide. Then, catalyzes the conversion of ornithine to proline, with the release of ammonia. This chain is Bifunctional arginine dihydrolase/ornithine cyclodeaminase AgrE, found in Nostoc sp. (strain PCC 7120 / SAG 25.82 / UTEX 2576).